The following is a 143-amino-acid chain: Anti-sigma F factor (143 aa).

It belongs to the anti-sigma-factor family.

The catalysed reaction is L-seryl-[protein] + ATP = O-phospho-L-seryl-[protein] + ADP + H(+). It catalyses the reaction L-threonyl-[protein] + ATP = O-phospho-L-threonyl-[protein] + ADP + H(+). Functionally, binds to sigma F and blocks its ability to form an RNA polymerase holoenzyme (E-sigma F). Phosphorylates SpoIIAA on a serine residue. This phosphorylation may enable SpoIIAA to act as an anti-anti-sigma factor that counteracts SpoIIAB and thus releases sigma F from inhibition. The polypeptide is Anti-sigma F factor (Caldanaerobacter subterraneus subsp. tengcongensis (strain DSM 15242 / JCM 11007 / NBRC 100824 / MB4) (Thermoanaerobacter tengcongensis)).